A 1327-amino-acid polypeptide reads, in one-letter code: Putative ATP-dependent RNA helicase ucp12 (1327 aa).

2 disordered regions span residues 1–58 (MGSK…KQLV) and 201–222 (QAAR…NEKV). Residues 18-41 (SKNKEKNIKGKKKNSLDPIEKNKQ) show a composition bias toward basic and acidic residues. The span at 42-58 (ETAGLQTTSRPTAKQLV) shows a compositional bias: polar residues. The region spanning 276 to 315 (EPDTSIVNDLISLGFRDIHAKEACQYCVSLEDALEWLIIH) is the UBA domain. The RWD domain occupies 405–504 (DDVSALQSIL…NHLQENIEDF (100 aa)). The Helicase ATP-binding domain maps to 587 to 756 (MDAIQHSQVV…FGNAGHLHIH (170 aa)). 600–607 (GETGSGKS) contributes to the ATP binding site. Positions 703–706 (DEVH) match the DEAH box motif. The 172-residue stretch at 797-968 (LISRLVSSID…QVCLNVVPLV (172 aa)) folds into the Helicase C-terminal domain.

This sequence belongs to the DEAD box helicase family. DEAH subfamily.

It localises to the cytoplasm. The catalysed reaction is ATP + H2O = ADP + phosphate + H(+). Functionally, probable ATP-binding RNA helicase. This chain is Putative ATP-dependent RNA helicase ucp12 (ucp12), found in Schizosaccharomyces pombe (strain 972 / ATCC 24843) (Fission yeast).